The chain runs to 351 residues: Type II methyltransferase M.DsaV (351 aa).

Positions 6–312 (LKFIDLFAGI…QKMLSYIDLT (307 aa)) constitute an SAM-dependent MTase C5-type domain. Cys75 is an active-site residue.

Belongs to the class I-like SAM-binding methyltransferase superfamily. C5-methyltransferase family.

The enzyme catalyses a 2'-deoxycytidine in DNA + S-adenosyl-L-methionine = a 5-methyl-2'-deoxycytidine in DNA + S-adenosyl-L-homocysteine + H(+). A methylase, recognizes the double-stranded sequence 5'-CCNGG-3', methylates C-2 on both strands, and protects the DNA from cleavage by the DsaV endonuclease. The sequence is that of Type II methyltransferase M.DsaV from Dactylococcopsis salina (Myxobaktron salinum).